The chain runs to 20 residues: Isocitrate dehydrogenase [NADP] (20 aa).

The protein belongs to the isocitrate and isopropylmalate dehydrogenases family. Requires Mn(2+) as cofactor. Mg(2+) serves as cofactor.

The protein resides in the cytoplasm. The catalysed reaction is D-threo-isocitrate + NADP(+) = 2-oxoglutarate + CO2 + NADPH. The polypeptide is Isocitrate dehydrogenase [NADP] (Naegleria fowleri (Brain eating amoeba)).